We begin with the raw amino-acid sequence, 306 residues long: Arylesterase (306 aa).

Residues His82–Gly84 carry the Involved in the stabilization of the negatively charged intermediate by the formation of the oxyanion hole motif. Residues Ser156, Asp251, and His281 contribute to the active site.

In terms of assembly, monomer.

It catalyses the reaction a phenyl acetate + H2O = a phenol + acetate + H(+). The catalysed reaction is An aryl dialkyl phosphate + H2O = dialkyl phosphate + an aryl alcohol.. Completely inhibited by chemical modifiers that are specific to Cys (HgCl(2) and p-chloromercuribenzoic acid), His (diethyl pyrocarbonate) and Ser (diisopropyl fluorophosphate and phenylmethanesulfonyl fluoride). No significant effect with chemical modifiers specific to Lys (pyridoxal 5'-phosphate) and Arg (phenylglyoxal). Not inhibited by inhibitors of A-esterases (paraoxon) or C-esterases (physostigmine/eserine). Activity is also not effected by incubation with 5 mM divalent cations for 30 minutes at 30 degrees Celsius or with 10 mM EDTA for 60 minutes at 75 degrees Celsius. Has a broad substrate specificity. Hydrolyzes various p-nitrophenyl phosphates, aromatic esters and p-nitrophenyl fatty acids in vitro. Most active against paraoxon, phenyl acetate and p-nitrophenyl caproate (C6), respectively. Also has tributyrinase activity, but shows no hydrolytic activity toward other triacylglycerols including tricaprylin, trimyristin, tripalmitin or triolein in vitro. The protein is Arylesterase of Saccharolobus solfataricus (Sulfolobus solfataricus).